The chain runs to 104 residues: N(4)-acetylcytidine amidohydrolase (104 aa).

The 89-residue stretch at I6–Q94 folds into the ASCH domain. Residue K21 is the Proton acceptor of the active site. The active-site Nucleophile is the T24. The active-site Proton donor is E74.

The protein belongs to the N(4)-acetylcytidine amidohydrolase family.

It catalyses the reaction N(4)-acetylcytidine + H2O = cytidine + acetate + H(+). It carries out the reaction N(4)-acetyl-2'-deoxycytidine + H2O = 2'-deoxycytidine + acetate + H(+). The enzyme catalyses N(4)-acetylcytosine + H2O = cytosine + acetate + H(+). In terms of biological role, catalyzes the hydrolysis of N(4)-acetylcytidine (ac4C). The chain is N(4)-acetylcytidine amidohydrolase (yqfB) from Salmonella agona (strain SL483).